Here is a 494-residue protein sequence, read N- to C-terminus: DDB1- and CUL4-associated factor 4 (494 aa).

Residues 1-65 (MHQSSWKSRR…AGSSSVPDLP (65 aa)) form a disordered region. A compositionally biased stretch (basic residues) spans 7–20 (KSRRHRRRGHRHSA). Positions 51 to 60 (STSSTAGSSS) are enriched in low complexity. WD repeat units follow at residues 367–406 (FHDS…CIRQ) and 409–450 (GHVN…LLRT).

Interacts with DDB1 and CUL4A.

It participates in protein modification; protein ubiquitination. May function as a substrate receptor for CUL4-DDB1 E3 ubiquitin-protein ligase complex. In Bos taurus (Bovine), this protein is DDB1- and CUL4-associated factor 4 (DCAF4).